Reading from the N-terminus, the 401-residue chain is Tyrosine--tRNA ligase (401 aa).

A 'HIGH' region motif is present at residues 42–51 (PTAPDIHLGH). The short motif at 226–230 (KMSKS) is the 'KMSKS' region element. Lysine 229 is a binding site for ATP. The S4 RNA-binding domain occupies 334–394 (MGLATLLKEA…GKRKFARVRL (61 aa)).

Belongs to the class-I aminoacyl-tRNA synthetase family. TyrS type 2 subfamily. Homodimer.

Its subcellular location is the cytoplasm. It carries out the reaction tRNA(Tyr) + L-tyrosine + ATP = L-tyrosyl-tRNA(Tyr) + AMP + diphosphate + H(+). Catalyzes the attachment of tyrosine to tRNA(Tyr) in a two-step reaction: tyrosine is first activated by ATP to form Tyr-AMP and then transferred to the acceptor end of tRNA(Tyr). This Haemophilus influenzae (strain ATCC 51907 / DSM 11121 / KW20 / Rd) protein is Tyrosine--tRNA ligase.